Consider the following 484-residue polypeptide: Glycogen synthase (484 aa).

An ADP-alpha-D-glucose-binding site is contributed by lysine 18.

The protein belongs to the glycosyltransferase 1 family. Bacterial/plant glycogen synthase subfamily.

The enzyme catalyses [(1-&gt;4)-alpha-D-glucosyl](n) + ADP-alpha-D-glucose = [(1-&gt;4)-alpha-D-glucosyl](n+1) + ADP + H(+). It functions in the pathway glycan biosynthesis; glycogen biosynthesis. Synthesizes alpha-1,4-glucan chains using ADP-glucose. The sequence is that of Glycogen synthase from Vibrio cholerae serotype O1 (strain ATCC 39541 / Classical Ogawa 395 / O395).